The following is a 299-amino-acid chain: Taste receptor type 2 member 5 (299 aa).

Residue M1 is a topological domain, extracellular. The helical transmembrane segment at 2 to 22 threads the bilayer; the sequence is LSAGLGLLMLVAVIEFLIGLI. The Cytoplasmic segment spans residues 23–45; that stretch reads GNGILVVWSLREWIRKFSWSSYN. The chain crosses the membrane as a helical span at residues 46 to 66; the sequence is LIILGLAGCRFLLQWLIILDL. At 67 to 82 the chain is on the extracellular side; that stretch reads SLFPLFQSSSWLRYLN. A helical membrane pass occupies residues 83–103; it reads VFWVLVSQASLWFATFLSVFY. Residues 104–127 lie on the Cytoplasmic side of the membrane; that stretch reads CKKITTFDRPAYLWLKQRAYNLSL. The chain crosses the membrane as a helical span at residues 128-148; sequence WCLLGYFIISLLLTVQVGLTV. Residues 149 to 175 lie on the Extracellular side of the membrane; that stretch reads HHPPQGNSSIRYPFEHWQYLYVFQLNS. N-linked (GlcNAc...) asparagine glycosylation is present at N155. A helical membrane pass occupies residues 176 to 196; sequence GSYLPLMVFLVSSGMLIISLY. At 197 to 223 the chain is on the cytoplasmic side; that stretch reads THHKKMKVHSAGRRDARAKAHITALKS. A helical transmembrane segment spans residues 224 to 244; it reads LGCFLLLHLVYIVASPFSITS. Over 245–253 the chain is Extracellular; it reads KTYPPDLTS. The helical transmembrane segment at 254-274 threads the bilayer; it reads VFIWETLMAAYPSLHSLMLIM. Residues 275 to 299 lie on the Cytoplasmic side of the membrane; sequence GIPRVKQTCQKILWKTVCARRCWGP.

This sequence belongs to the G-protein coupled receptor T2R family.

The protein resides in the membrane. In terms of biological role, receptor that may play a role in the perception of bitterness and is gustducin-linked. May play a role in sensing the chemical composition of the gastrointestinal content. The activity of this receptor may stimulate alpha gustducin, mediate PLC-beta-2 activation and lead to the gating of TRPM5. The chain is Taste receptor type 2 member 5 (TAS2R5) from Papio hamadryas (Hamadryas baboon).